A 516-amino-acid polypeptide reads, in one-letter code: Calcium and calcium/calmodulin-dependent serine/threonine-protein kinase (516 aa).

Residues 13–298 (YEVVDVLGRG…ASDLLRHPWV (286 aa)) form the Protein kinase domain. ATP-binding positions include 19 to 27 (LGRGGFSIV) and lysine 43. The active-site Proton acceptor is the aspartate 163. Threonine 263 carries the phosphothreonine modification. Residues 321 to 334 (ARRKLRAAAIASVL) are calmodulin-binding. The stretch at 343-363 (KRLRNLLGTHDLTSEELDNLR) forms a coiled coil. 3 consecutive EF-hand domains span residues 392–427 (SLIPLAPRVFDLFDNNRDGTVDMREILCGFSSLRNS), 428–463 (RGDDALRLCFQMYDADRSGCISKEELASMLRALPEE), and 470–505 (TEPGKLDEVFDQMDADSDGKVTFDEFKAAMNKDSAL). Ca(2+) contacts are provided by aspartate 405, asparagine 407, aspartate 409, threonine 411, glutamate 416, aspartate 441, aspartate 443, serine 445, cysteine 447, glutamate 452, aspartate 483, aspartate 485, aspartate 487, lysine 489, and glutamate 494.

Belongs to the protein kinase superfamily. CAMK Ser/Thr protein kinase family. CaMK subfamily. Autophosphorylation. As to expression, mainly expressed in roots and panicles. Detected in leaves, shoots and culms.

It localises to the nucleus. It is found in the cytoplasm. The protein localises to the cell membrane. It carries out the reaction L-seryl-[protein] + ATP = O-phospho-L-seryl-[protein] + ADP + H(+). The enzyme catalyses L-threonyl-[protein] + ATP = O-phospho-L-threonyl-[protein] + ADP + H(+). Functionally, calcium- and calmodulin-dependent protein kinase required for arbuscular mycorrhizal (AM) symbiosis. Involved in response to water deprivation stress. Required for abscisic acid-induced antioxidant defense and oxidative stress tolerance during dehydration stress. Functions upstream of MPK1 in an abscisic acid signaling pathway that regulates the activities of antioxidant enzymes and the production of hydrogen peroxide. In Oryza sativa subsp. japonica (Rice), this protein is Calcium and calcium/calmodulin-dependent serine/threonine-protein kinase (CCAMK).